We begin with the raw amino-acid sequence, 217 residues long: Large ribosomal subunit protein uL1 (217 aa).

Belongs to the universal ribosomal protein uL1 family. Part of the 50S ribosomal subunit.

Functionally, binds directly to 23S rRNA. Probably involved in E site tRNA release. Protein L1 is also a translational repressor protein, it controls the translation of its operon by binding to its mRNA. The chain is Large ribosomal subunit protein uL1 from Aeropyrum pernix (strain ATCC 700893 / DSM 11879 / JCM 9820 / NBRC 100138 / K1).